The primary structure comprises 307 residues: Transcription initiation factor IIB 2 (307 aa).

The TFIIB-type zinc finger occupies 7–38 (TPKRCPECNSEHLIRDYEHGELICADCGAVIE). Residues C11, C14, C30, and C33 each coordinate Zn(2+). A run of 2 repeats spans residues 124 to 207 (QLLN…AKEL) and 218 to 299 (SYIS…EISK).

Belongs to the TFIIB family.

Stabilizes TBP binding to an archaeal box-A promoter. Also responsible for recruiting RNA polymerase II to the pre-initiation complex (DNA-TBP-TFIIB). The sequence is that of Transcription initiation factor IIB 2 from Thermoplasma acidophilum (strain ATCC 25905 / DSM 1728 / JCM 9062 / NBRC 15155 / AMRC-C165).